The primary structure comprises 300 residues: N-acetylmuramic acid 6-phosphate etherase 2 (300 aa).

One can recognise an SIS domain in the interval 57–220 (ITAAFANGGR…TTGAMIRSGK (164 aa)). Glu85 acts as the Proton donor in catalysis. Glu116 is an active-site residue.

It belongs to the GCKR-like family. MurNAc-6-P etherase subfamily. Homodimer.

The enzyme catalyses N-acetyl-D-muramate 6-phosphate + H2O = N-acetyl-D-glucosamine 6-phosphate + (R)-lactate. Its pathway is amino-sugar metabolism; 1,6-anhydro-N-acetylmuramate degradation. It functions in the pathway amino-sugar metabolism; N-acetylmuramate degradation. The protein operates within cell wall biogenesis; peptidoglycan recycling. Functionally, specifically catalyzes the cleavage of the D-lactyl ether substituent of MurNAc 6-phosphate, producing GlcNAc 6-phosphate and D-lactate. Together with AnmK, is also required for the utilization of anhydro-N-acetylmuramic acid (anhMurNAc) either imported from the medium or derived from its own cell wall murein, and thus plays a role in cell wall recycling. The sequence is that of N-acetylmuramic acid 6-phosphate etherase 2 from Vibrio parahaemolyticus serotype O3:K6 (strain RIMD 2210633).